A 134-amino-acid polypeptide reads, in one-letter code: uncharacterized protein (134 aa).

The next 3 helical transmembrane spans lie at 8 to 28 (FTSL…TVMY), 54 to 74 (GFQA…TFLL), and 113 to 133 (LACF…RLVD).

The protein belongs to the cornichon family.

It localises to the endoplasmic reticulum membrane. This is an uncharacterized protein from Schizosaccharomyces pombe (strain 972 / ATCC 24843) (Fission yeast).